Reading from the N-terminus, the 354-residue chain is Membrane progestin receptor beta (354 aa).

The Cytoplasmic portion of the chain corresponds to 1–75 (MTTAILERLS…FFSLFQKHNE (75 aa)). A helical transmembrane segment spans residues 76-96 (VVNVWTHLLAALAVLLRFWAF). Residues 97-111 (AEAEALPWASTHSLP) are Extracellular-facing. The chain crosses the membrane as a helical span at residues 112-132 (LLLFILSSITYLTCSLLAHLL). Over 133–174 (QSKSELSHYTFYFVDYVGVSVYQYGSALAHFFYSSDQAWYDR) the chain is Cytoplasmic. A helical membrane pass occupies residues 175-195 (FWLFFLPAAAFCGWLSCAGCC). Over 196 to 213 (YAKYRYRRPYPVMRKICQ) the chain is Extracellular. A helical transmembrane segment spans residues 214 to 234 (VVPAGLAFILDISPVAHRVAL). At 235–243 (CHLAGCQEQ) the chain is on the cytoplasmic side. The helical transmembrane segment at 244–264 (AAWYHTLQILFFLVSAYFFSC) threads the bilayer. Residues 265–283 (PVPEKYFPGSCDIVGHGHQ) lie on the Extracellular side of the membrane. The helical transmembrane segment at 284 to 304 (IFHAFLSICTLSQLEAILLDY) threads the bilayer. The Cytoplasmic portion of the chain corresponds to 305–319 (QGRQEIFLQRHGPLS). A helical transmembrane segment spans residues 320–340 (VHMACLSFFFLAACSAATAAL). Over 341-354 (LRHKVKARLTKKDS) the chain is Extracellular.

Belongs to the ADIPOR family. In terms of tissue distribution, highly expressed in the hypothalamus. Also expressed in spinal cord, kidney and testis.

It localises to the cell membrane. Its function is as follows. Plasma membrane progesterone (P4) receptor coupled to G proteins. Seems to act through a G(i) mediated pathway. May be involved in oocyte maturation. Also binds dehydroepiandrosterone (DHEA), pregnanolone, pregnenolone and allopregnanolone. This Homo sapiens (Human) protein is Membrane progestin receptor beta.